Here is a 202-residue protein sequence, read N- to C-terminus: Histone chaperone ASF1B (202 aa).

Residues 1–156 are interaction with histone H3 and CHAF1B; sequence MAKVSVLNVA…TRFHINWDNN (156 aa). The residue at position 198 (S198) is a Phosphoserine; by TLK2.

It belongs to the ASF1 family. As to quaternary structure, interacts with histone H3 (via C-terminus), including histone H3.1, H3.2 and H3.3, and histone H4; the interaction with H3 is direct. Interacts with the CHAF1A, CHAF1B and RBBP4 subunits of the CAF-1 complex. Interacts with HAT1, NASP and TAF1. Found in a soluble complex with NASP and histones H3 and H4; the interaction with NASP is probably indirect and mediated by H3-H4. Interacts with CDAN1. Found in a cytosolic complex with CDAN1, ASF1A, IPO4 and histones H3.1 and H4. Interacts with CREBBP. Post-translationally, phosphorylated by TLK1 and TLK2.

Its subcellular location is the nucleus. The protein resides in the cytoplasm. The protein localises to the cytosol. In terms of biological role, histone chaperone that facilitates histone deposition and histone exchange and removal during nucleosome assembly and disassembly. Cooperates with chromatin assembly factor 1 (CAF-1) to promote replication-dependent chromatin assembly. Also involved in the nuclear import of the histone H3-H4 dimer together with importin-4 (IPO4): specifically recognizes and binds newly synthesized histones with the monomethylation of H3 'Lys-9' (H3K9me1) and diacetylation at 'Lys-5' and 'Lys-12' of H4 (H4K5ac and H4K12ac) marks in the cytosol. Does not participate in replication-independent nucleosome deposition which is mediated by ASF1A and HIRA. Required for gonad development. This chain is Histone chaperone ASF1B (ASF1B), found in Bos taurus (Bovine).